Consider the following 80-residue polypeptide: Serine protease inhibitor Kazal-type 1 (80 aa).

Residues 1–23 form the signal peptide; sequence MKVAVIFLLSALALLSLAGNTFS. The Kazal-like domain maps to 27 to 80; it reads TGKEASCHDAVAGCPRIYDPVCGTDGITYANECVLCFENRKRIEPVLIRKGGPC. Disulfide bonds link cysteine 33–cysteine 62, cysteine 40–cysteine 59, and cysteine 48–cysteine 80.

As to expression, in the genital tract, expressed only in male accessory glands including seminal vesicle, coagulating gland and prostate.

The protein localises to the secreted. In terms of biological role, serine protease inhibitor which exhibits anti-trypsin activity. In the pancreas, protects against trypsin-catalyzed premature activation of zymogens. In the male reproductive tract, binds to sperm heads where it modulates sperm capacitance by inhibiting calcium uptake and nitrogen oxide (NO) production. The polypeptide is Serine protease inhibitor Kazal-type 1 (Mus musculus (Mouse)).